The following is a 37-amino-acid chain: Large ribosomal subunit protein bL36c (37 aa).

This sequence belongs to the bacterial ribosomal protein bL36 family.

The protein resides in the plastid. It localises to the chloroplast. This is Large ribosomal subunit protein bL36c from Staurastrum punctulatum (Green alga).